The primary structure comprises 198 residues: ATP synthase protein MI25 (198 aa).

Residues Ile-29–Ser-49 form a helical membrane-spanning segment.

This sequence belongs to the ATPase protein MI25 family. As to quaternary structure, F-type ATPases have 2 components, CF(1) - the catalytic core - and CF(0) - the membrane proton channel. CF(1) has five subunits: alpha(3), beta(3), gamma(1), delta(1), epsilon(1). CF(0) has three main subunits: a, b and c.

It localises to the mitochondrion membrane. This is one of the chains of the nonenzymatic component (CF(0) subunit) of the mitochondrial ATPase complex. In Nicotiana tabacum (Common tobacco), this protein is ATP synthase protein MI25.